We begin with the raw amino-acid sequence, 140 residues long: MKIAIYPGSFNPFHKGHLNILKKAILLFDKVYVVVSKNVNKSLDPDLQSRVENIKNLIKDFSNVEIIINENKLTTTIAKELNACFIIRGLRSQADFEYEIKYYDGFKSLDPNIEVVYFISDYDKRSLSSTILREIEFYKK.

S9 is a substrate binding site. ATP contacts are provided by residues 9–10 (SF) and H17. Residues K41, T74, and R88 each contribute to the substrate site. ATP contacts are provided by residues 89-91 (GLR), E99, and 124-130 (KRSLSST).

It belongs to the bacterial CoaD family. As to quaternary structure, homohexamer. Mg(2+) is required as a cofactor.

The protein resides in the cytoplasm. It catalyses the reaction (R)-4'-phosphopantetheine + ATP + H(+) = 3'-dephospho-CoA + diphosphate. Its pathway is cofactor biosynthesis; coenzyme A biosynthesis; CoA from (R)-pantothenate: step 4/5. Functionally, reversibly transfers an adenylyl group from ATP to 4'-phosphopantetheine, yielding dephospho-CoA (dPCoA) and pyrophosphate. This chain is Phosphopantetheine adenylyltransferase, found in Mycoplasma capricolum subsp. capricolum (strain California kid / ATCC 27343 / NCTC 10154).